The chain runs to 646 residues: Serine/threonine-protein kinase PLK3 (646 aa).

Residues 1 to 35 (MEPAAGFLSPRPFQRAAAAPAPPAGPGPPPSALRG) are disordered. The segment covering 10–19 (PRPFQRAAAA) has biased composition (low complexity). A compositionally biased stretch (pro residues) spans 20–31 (PAPPAGPGPPPS). A Protein kinase domain is found at 62 to 314 (YLKGRLLGKG…IDQILRHDFF (253 aa)). ATP is bound by residues 68 to 76 (LGKGGFARC) and Lys-91. Residue Asp-185 is the Proton acceptor of the active site. The disordered stretch occupies residues 381-417 (GHQDARPEAPAASGPAPVSLVETAPEDSSPRGTLASS). POLO box domains are found at residues 463-541 (WVSK…YMEQ) and 562-645 (LLLQ…DRSP).

This sequence belongs to the protein kinase superfamily. Ser/Thr protein kinase family. CDC5/Polo subfamily. As to quaternary structure, interacts (via the POLO-box domain) with CIB1; leading to inhibit PLK3 kinase activity. Interacts with GOLGB1. Phosphorylated in an ATM-dependent manner following DNA damage. Phosphorylated as cells enter mitosis and dephosphorylated as cells exit mitosis. In terms of tissue distribution, transcripts are highly detected in placenta, lung, followed by skeletal muscle, heart, pancreas, ovaries and kidney and weakly detected in liver and brain. May have a short half-live. In cells of hematopoietic origin, strongly and exclusively detected in terminally differentiated macrophages. Transcript expression appears to be down-regulated in primary lung tumor.

The protein resides in the cytoplasm. It localises to the nucleus. It is found in the nucleolus. The protein localises to the golgi apparatus. Its subcellular location is the cytoskeleton. The protein resides in the microtubule organizing center. It localises to the centrosome. The enzyme catalyses L-seryl-[protein] + ATP = O-phospho-L-seryl-[protein] + ADP + H(+). The catalysed reaction is L-threonyl-[protein] + ATP = O-phospho-L-threonyl-[protein] + ADP + H(+). In terms of biological role, serine/threonine-protein kinase involved in cell cycle regulation, response to stress and Golgi disassembly. Polo-like kinases act by binding and phosphorylating proteins that are already phosphorylated on a specific motif recognized by the POLO box domains. Phosphorylates ATF2, BCL2L1, CDC25A, CDC25C, CHEK2, HIF1A, JUN, p53/TP53, p73/TP73, PTEN, TOP2A and VRK1. Involved in cell cycle regulation: required for entry into S phase and cytokinesis. Phosphorylates BCL2L1, leading to regulate the G2 checkpoint and progression to cytokinesis during mitosis. Plays a key role in response to stress: rapidly activated upon stress stimulation, such as ionizing radiation, reactive oxygen species (ROS), hyperosmotic stress, UV irradiation and hypoxia. Involved in DNA damage response and G1/S transition checkpoint by phosphorylating CDC25A, p53/TP53 and p73/TP73. Phosphorylates p53/TP53 in response to reactive oxygen species (ROS), thereby promoting p53/TP53-mediated apoptosis. Phosphorylates CHEK2 in response to DNA damage, promoting the G2/M transition checkpoint. Phosphorylates the transcription factor p73/TP73 in response to DNA damage, leading to inhibit p73/TP73-mediated transcriptional activation and pro-apoptotic functions. Phosphorylates HIF1A and JUN is response to hypoxia. Phosphorylates ATF2 following hyperosmotic stress in corneal epithelium. Also involved in Golgi disassembly during the cell cycle: part of a MEK1/MAP2K1-dependent pathway that induces Golgi fragmentation during mitosis by mediating phosphorylation of VRK1. May participate in endomitotic cell cycle, a form of mitosis in which both karyokinesis and cytokinesis are interrupted and is a hallmark of megakaryocyte differentiation, via its interaction with CIB1. This chain is Serine/threonine-protein kinase PLK3 (PLK3), found in Homo sapiens (Human).